A 149-amino-acid polypeptide reads, in one-letter code: Large ribosomal subunit protein bL9 (149 aa).

The protein belongs to the bacterial ribosomal protein bL9 family.

Binds to the 23S rRNA. The sequence is that of Large ribosomal subunit protein bL9 from Thermotoga petrophila (strain ATCC BAA-488 / DSM 13995 / JCM 10881 / RKU-1).